Reading from the N-terminus, the 192-residue chain is Acetolactate synthase small subunit (192 aa).

Positions 29-103 (IITVKVRNEM…DTLKVSDLTD (75 aa)) constitute an ACT domain.

Belongs to the acetolactate synthase small subunit family. As to quaternary structure, dimer of large and small chains.

The catalysed reaction is 2 pyruvate + H(+) = (2S)-2-acetolactate + CO2. It functions in the pathway amino-acid biosynthesis; L-isoleucine biosynthesis; L-isoleucine from 2-oxobutanoate: step 1/4. The protein operates within amino-acid biosynthesis; L-valine biosynthesis; L-valine from pyruvate: step 1/4. The protein is Acetolactate synthase small subunit (ilvH) of Aquifex aeolicus (strain VF5).